Consider the following 122-residue polypeptide: Acidic phospholipase A2 BlatPLA2 (122 aa).

7 disulfides stabilise this stretch: cysteine 26-cysteine 115, cysteine 28-cysteine 44, cysteine 43-cysteine 95, cysteine 49-cysteine 122, cysteine 50-cysteine 88, cysteine 57-cysteine 81, and cysteine 75-cysteine 86. Ca(2+) is bound by residues tyrosine 27, glycine 29, and glycine 31. The active site involves histidine 47. Residue aspartate 48 coordinates Ca(2+). Residue aspartate 89 is part of the active site.

It belongs to the phospholipase A2 family. Group II subfamily. D49 sub-subfamily. In terms of assembly, monomer. It depends on Ca(2+) as a cofactor. Expressed by the venom gland.

The protein localises to the secreted. The enzyme catalyses a 1,2-diacyl-sn-glycero-3-phosphocholine + H2O = a 1-acyl-sn-glycero-3-phosphocholine + a fatty acid + H(+). Functionally, acidic phospholipase A2 (PLA2) that only causes a mild edema, when subcutaneously injected in the mice foot. PLA2 catalyzes the calcium-dependent hydrolysis of the 2-acyl groups in 3-sn-phosphoglycerides. The protein is Acidic phospholipase A2 BlatPLA2 of Bothriechis lateralis (Side-striped palm pitviper).